The chain runs to 234 residues: UPF0441 protein plu3956 (234 aa).

Disordered stretches follow at residues 105-129 (QAGLGTTTSSTSTNGEAQAQQQQSG) and 149-234 (SAPS…SVGG). The span at 110-127 (TTTSSTSTNGEAQAQQQQ) shows a compositional bias: low complexity. Polar residues predominate over residues 150 to 175 (APSQPLFSSKSATSPANGQFVDSTGK). Low complexity-rich tracts occupy residues 188 to 205 (TVPKTAMAPKPATTTTIT) and 216 to 234 (QSTMQRSASSGSTSRSVGG).

Belongs to the UPF0441 family.

This is UPF0441 protein plu3956 from Photorhabdus laumondii subsp. laumondii (strain DSM 15139 / CIP 105565 / TT01) (Photorhabdus luminescens subsp. laumondii).